The sequence spans 432 residues: Glutamate-1-semialdehyde 2,1-aminomutase (432 aa).

K265 carries the N6-(pyridoxal phosphate)lysine modification.

Belongs to the class-III pyridoxal-phosphate-dependent aminotransferase family. HemL subfamily. As to quaternary structure, homodimer. Requires pyridoxal 5'-phosphate as cofactor.

It is found in the cytoplasm. The enzyme catalyses (S)-4-amino-5-oxopentanoate = 5-aminolevulinate. It participates in porphyrin-containing compound metabolism; protoporphyrin-IX biosynthesis; 5-aminolevulinate from L-glutamyl-tRNA(Glu): step 2/2. This Photobacterium profundum (strain SS9) protein is Glutamate-1-semialdehyde 2,1-aminomutase.